A 337-amino-acid polypeptide reads, in one-letter code: 2-oxoglutarate-dependent ethylene/succinate-forming enzyme (337 aa).

One can recognise a Fe2OG dioxygenase domain in the interval 166 to 286 (GWHHMRVLRF…RFACAYFHEP (121 aa)). Fe cation-binding residues include H189 and H268.

Belongs to the iron/ascorbate-dependent oxidoreductase family. As to quaternary structure, monomer. Fe(2+) serves as cofactor.

It catalyses the reaction 2-oxoglutarate + O2 + 2 H(+) = ethene + 3 CO2 + H2O. The enzyme catalyses L-arginine + 2-oxoglutarate + O2 = guanidine + L-glutamate 5-semialdehyde + succinate + CO2. It functions in the pathway alkene biosynthesis; ethylene biosynthesis via 2-oxoglutarate. In terms of biological role, simultaneously catalyzes two reactions, namely formation of ethylene and of succinate from 2-oxoglutarate. The polypeptide is 2-oxoglutarate-dependent ethylene/succinate-forming enzyme (efe) (Pseudomonas syringae pv. pisi).